Reading from the N-terminus, the 287-residue chain is Large ribosomal subunit protein uL2 (287 aa).

Residues 221-287 (RGSVMNPCDH…SKRSRGGRDS (67 aa)) form a disordered region. Positions 258 to 287 (KTRKKNKPSNKLVVRRRRRISKRSRGGRDS) are enriched in basic residues.

Belongs to the universal ribosomal protein uL2 family. Part of the 50S ribosomal subunit. Forms a bridge to the 30S subunit in the 70S ribosome.

Functionally, one of the primary rRNA binding proteins. Required for association of the 30S and 50S subunits to form the 70S ribosome, for tRNA binding and peptide bond formation. It has been suggested to have peptidyltransferase activity; this is somewhat controversial. Makes several contacts with the 16S rRNA in the 70S ribosome. This is Large ribosomal subunit protein uL2 from Prochlorococcus marinus subsp. pastoris (strain CCMP1986 / NIES-2087 / MED4).